A 441-amino-acid polypeptide reads, in one-letter code: Ribulose bisphosphate carboxylase large chain (441 aa).

Lys5 is modified (N6,N6,N6-trimethyllysine). Substrate-binding residues include Asn114 and Thr164. The active-site Proton acceptor is Lys166. Lys168 provides a ligand contact to substrate. Mg(2+) contacts are provided by Lys192, Asp194, and Glu195. Lys192 is modified (N6-carboxylysine). The active-site Proton acceptor is His285. Substrate is bound by residues Arg286, His318, and Ser370.

This sequence belongs to the RuBisCO large chain family. Type I subfamily. In terms of assembly, heterohexadecamer of 8 large chains and 8 small chains; disulfide-linked. The disulfide link is formed within the large subunit homodimers. It depends on Mg(2+) as a cofactor. The disulfide bond which can form in the large chain dimeric partners within the hexadecamer appears to be associated with oxidative stress and protein turnover.

It localises to the plastid. It is found in the chloroplast. The catalysed reaction is 2 (2R)-3-phosphoglycerate + 2 H(+) = D-ribulose 1,5-bisphosphate + CO2 + H2O. The enzyme catalyses D-ribulose 1,5-bisphosphate + O2 = 2-phosphoglycolate + (2R)-3-phosphoglycerate + 2 H(+). Its function is as follows. RuBisCO catalyzes two reactions: the carboxylation of D-ribulose 1,5-bisphosphate, the primary event in carbon dioxide fixation, as well as the oxidative fragmentation of the pentose substrate in the photorespiration process. Both reactions occur simultaneously and in competition at the same active site. In Pellaea rotundifolia (Button fern), this protein is Ribulose bisphosphate carboxylase large chain.